We begin with the raw amino-acid sequence, 489 residues long: Glycogen synthase (489 aa).

An ADP-alpha-D-glucose-binding site is contributed by Lys-15.

The protein belongs to the glycosyltransferase 1 family. Bacterial/plant glycogen synthase subfamily.

It carries out the reaction [(1-&gt;4)-alpha-D-glucosyl](n) + ADP-alpha-D-glucose = [(1-&gt;4)-alpha-D-glucosyl](n+1) + ADP + H(+). It participates in glycan biosynthesis; glycogen biosynthesis. Its function is as follows. Synthesizes alpha-1,4-glucan chains using ADP-glucose. The chain is Glycogen synthase from Francisella tularensis subsp. holarctica (strain FTNF002-00 / FTA).